The following is a 103-amino-acid chain: Thioredoxin-1 (103 aa).

The 102-residue stretch at 2–103 folds into the Thioredoxin domain; sequence VKQVSDSSEF…KLEASIKANL (102 aa). Residues cysteine 30 and cysteine 33 each act as nucleophile in the active site. Residues cysteine 30 and cysteine 33 are joined by a disulfide bond.

The protein belongs to the thioredoxin family.

Its function is as follows. Participates in various redox reactions through the reversible oxidation of its active center dithiol to a disulfide and catalyzes dithiol-disulfide exchange reactions. The sequence is that of Thioredoxin-1 (trx1) from Schizosaccharomyces pombe (strain 972 / ATCC 24843) (Fission yeast).